The chain runs to 191 residues: Polysulfide reductase chain B (191 aa).

3 consecutive 4Fe-4S ferredoxin-type domains span residues 5 to 34, 50 to 83, and 84 to 113; these read YGMIHDENLCIGCQACNIACRSENKIPDSV, GTLSFNYHRQSCVQCENTPCVSVCPTKASYVNED, and GIVSVNVDLCVGCLYCIAACPYQARYVDPV. [4Fe-4S] cluster is bound by residues cysteine 14, cysteine 17, cysteine 20, cysteine 24, cysteine 61, cysteine 64, cysteine 69, cysteine 73, cysteine 93, cysteine 96, cysteine 99, cysteine 103, cysteine 120, cysteine 123, cysteine 136, and cysteine 140.

In terms of assembly, functional polysulfide reductase is made up of three different (A, B, and C) subunits.

Component of the phosphorylative electron transport system with polysulfide as the terminal acceptor. The polypeptide is Polysulfide reductase chain B (psrB) (Wolinella succinogenes (strain ATCC 29543 / DSM 1740 / CCUG 13145 / JCM 31913 / LMG 7466 / NCTC 11488 / FDC 602W) (Vibrio succinogenes)).